The chain runs to 235 residues: Ribosomal RNA-processing protein 17 (235 aa).

Positions 49–110 (QRQKKAQEFI…AKNDKTEDLQ (62 aa)) form a coiled coil. The span at 99–108 (EDAKNDKTED) shows a compositional bias: basic and acidic residues. Disordered stretches follow at residues 99-138 (EDAK…SVKP) and 209-235 (RVKK…KRRR). Residues serine 113, serine 116, and serine 122 each carry the phosphoserine modification. Residues 217 to 235 (TKNERRINQRKANDNKRRR) are compositionally biased toward basic and acidic residues.

This sequence belongs to the RRP17 family.

Its subcellular location is the nucleus. It is found in the nucleolus. Its function is as follows. Essential protein involved in ribosomal RNA processing. In Saccharomyces cerevisiae (strain ATCC 204508 / S288c) (Baker's yeast), this protein is Ribosomal RNA-processing protein 17 (RRP17).